The primary structure comprises 433 residues: Serine--tRNA ligase (433 aa).

Residue 235–237 coordinates L-serine; sequence TSE. 266 to 268 contacts ATP; that stretch reads RSE. Glu289 is an L-serine binding site. Residue 353–356 participates in ATP binding; sequence EISS. Position 388 (Ser388) interacts with L-serine.

It belongs to the class-II aminoacyl-tRNA synthetase family. Type-1 seryl-tRNA synthetase subfamily. As to quaternary structure, homodimer. The tRNA molecule binds across the dimer.

It is found in the cytoplasm. It carries out the reaction tRNA(Ser) + L-serine + ATP = L-seryl-tRNA(Ser) + AMP + diphosphate + H(+). The enzyme catalyses tRNA(Sec) + L-serine + ATP = L-seryl-tRNA(Sec) + AMP + diphosphate + H(+). It functions in the pathway aminoacyl-tRNA biosynthesis; selenocysteinyl-tRNA(Sec) biosynthesis; L-seryl-tRNA(Sec) from L-serine and tRNA(Sec): step 1/1. Catalyzes the attachment of serine to tRNA(Ser). Is also able to aminoacylate tRNA(Sec) with serine, to form the misacylated tRNA L-seryl-tRNA(Sec), which will be further converted into selenocysteinyl-tRNA(Sec). This Burkholderia orbicola (strain MC0-3) protein is Serine--tRNA ligase.